The primary structure comprises 401 residues: Protein KlcB (401 aa).

Residues 253–311 (AARSNAKGKAGGRERDPASAETAMRCSTAKADDCKAEAGPVSPEATMPGAGEASCSTAR) are disordered.

The sequence is that of Protein KlcB (klcB) from Escherichia coli.